A 106-amino-acid chain; its full sequence is Small ribosomal subunit protein uS10 (106 aa).

This sequence belongs to the universal ribosomal protein uS10 family. Part of the 30S ribosomal subunit.

Functionally, involved in the binding of tRNA to the ribosomes. The chain is Small ribosomal subunit protein uS10 from Caldicellulosiruptor bescii (strain ATCC BAA-1888 / DSM 6725 / KCTC 15123 / Z-1320) (Anaerocellum thermophilum).